The sequence spans 191 residues: MIGRLSGVLLEKNPPQLLVDCNGVGYEVNVPMSTFYNLPGLGDKVVLLTHLTVREDAHILFGFGTNEERNVFKQLVKITGIGARTALSILSGMSVADLAQAITMQEAGRLTKIPGIGKKTAERLLLELKGKLGADLGVAGAVATDATSDILNALLALGYSDKEAMLALKQVPAGTGVSDGIKLALKSLSKA.

Residues 1–64 (MIGRLSGVLL…EDAHILFGFG (64 aa)) are domain I. The tract at residues 65–137 (TNEERNVFKQ…LKGKLGADLG (73 aa)) is domain II. Residues 137–141 (GVAGA) are flexible linker. Residues 142–191 (VATDATSDILNALLALGYSDKEAMLALKQVPAGTGVSDGIKLALKSLSKA) form a domain III region.

The protein belongs to the RuvA family. Homotetramer. Forms an RuvA(8)-RuvB(12)-Holliday junction (HJ) complex. HJ DNA is sandwiched between 2 RuvA tetramers; dsDNA enters through RuvA and exits via RuvB. An RuvB hexamer assembles on each DNA strand where it exits the tetramer. Each RuvB hexamer is contacted by two RuvA subunits (via domain III) on 2 adjacent RuvB subunits; this complex drives branch migration. In the full resolvosome a probable DNA-RuvA(4)-RuvB(12)-RuvC(2) complex forms which resolves the HJ.

It localises to the cytoplasm. In terms of biological role, the RuvA-RuvB-RuvC complex processes Holliday junction (HJ) DNA during genetic recombination and DNA repair, while the RuvA-RuvB complex plays an important role in the rescue of blocked DNA replication forks via replication fork reversal (RFR). RuvA specifically binds to HJ cruciform DNA, conferring on it an open structure. The RuvB hexamer acts as an ATP-dependent pump, pulling dsDNA into and through the RuvAB complex. HJ branch migration allows RuvC to scan DNA until it finds its consensus sequence, where it cleaves and resolves the cruciform DNA. The sequence is that of Holliday junction branch migration complex subunit RuvA from Janthinobacterium sp. (strain Marseille) (Minibacterium massiliensis).